The sequence spans 418 residues: Serine hydroxymethyltransferase (418 aa).

Residues leucine 121 and 125–127 each bind (6S)-5,6,7,8-tetrahydrofolate; that span reads GHL. Residue lysine 230 is modified to N6-(pyridoxal phosphate)lysine. Residue 355-357 coordinates (6S)-5,6,7,8-tetrahydrofolate; the sequence is SPF.

This sequence belongs to the SHMT family. Homodimer. Requires pyridoxal 5'-phosphate as cofactor.

It localises to the cytoplasm. The catalysed reaction is (6R)-5,10-methylene-5,6,7,8-tetrahydrofolate + glycine + H2O = (6S)-5,6,7,8-tetrahydrofolate + L-serine. Its pathway is one-carbon metabolism; tetrahydrofolate interconversion. The protein operates within amino-acid biosynthesis; glycine biosynthesis; glycine from L-serine: step 1/1. Functionally, catalyzes the reversible interconversion of serine and glycine with tetrahydrofolate (THF) serving as the one-carbon carrier. This reaction serves as the major source of one-carbon groups required for the biosynthesis of purines, thymidylate, methionine, and other important biomolecules. Also exhibits THF-independent aldolase activity toward beta-hydroxyamino acids, producing glycine and aldehydes, via a retro-aldol mechanism. This chain is Serine hydroxymethyltransferase, found in Streptococcus pyogenes serotype M18 (strain MGAS8232).